Here is a 220-residue protein sequence, read N- to C-terminus: PRA1 family protein B4 (220 aa).

A disordered region spans residues 1–27 (MASSAPPVLPISNPQTVPSAAPSSVES). Residues 12 to 27 (SNPQTVPSAAPSSVES) are compositionally biased toward polar residues. The next 5 helical transmembrane spans lie at 83–103 (YSYFKVNYLTVATAIVGFSLV), 105–125 (HPFSLVFLLCLLASWLFLYLF), 146–166 (GCLILFSIFVIFLTDVGSVLV), 170–190 (MIGVALICAHGAFRAPEDLFL), and 196–216 (AATGFLSFLGGAASSAAPAVI).

The protein belongs to the PRA1 family. Interacts with PRA1B1, PRA1B2, PRA1B3, PRA1B5, PRA1B6 and PRA1E. In terms of tissue distribution, expressed in roots, lateral roots, lateral root caps, stomata and trichomes.

It is found in the endosome membrane. May be involved in both secretory and endocytic intracellular trafficking in the endosomal/prevacuolar compartments. The sequence is that of PRA1 family protein B4 (PRA1B4) from Arabidopsis thaliana (Mouse-ear cress).